Consider the following 371-residue polypeptide: Probable alcohol acetyltransferase (371 aa).

Catalysis depends on charge relay system residues serine 124 and histidine 295. The tract at residues 325–352 (AKALEESPKESYSRPPAHQQPLHKNDFT) is disordered. The span at 327–336 (ALEESPKESY) shows a compositional bias: basic and acidic residues.

Belongs to the AB hydrolase superfamily.

In terms of biological role, probable alcohol acetyltransferase that uses acetyl-CoA to synthesize acetate esters from various alcohols. Not involved in the synthesis of ethyl acetate. In Cyberlindnera fabianii (Yeast), this protein is Probable alcohol acetyltransferase (EAT2).